The following is a 193-amino-acid chain: Putative nitroreductase HBN1 (193 aa).

S2 is subject to N-acetylserine.

The protein belongs to the nitroreductase family. The cofactor is FMN.

It is found in the cytoplasm. Its subcellular location is the nucleus. The sequence is that of Putative nitroreductase HBN1 (HBN1) from Saccharomyces cerevisiae (strain ATCC 204508 / S288c) (Baker's yeast).